A 189-amino-acid chain; its full sequence is Potassium-transporting ATPase KdpC subunit (189 aa).

Residues 10–30 (VIFAMLTLICGVIYPYAITGI) form a helical membrane-spanning segment.

Belongs to the KdpC family. As to quaternary structure, the system is composed of three essential subunits: KdpA, KdpB and KdpC.

Its subcellular location is the cell inner membrane. Its function is as follows. Part of the high-affinity ATP-driven potassium transport (or Kdp) system, which catalyzes the hydrolysis of ATP coupled with the electrogenic transport of potassium into the cytoplasm. This subunit acts as a catalytic chaperone that increases the ATP-binding affinity of the ATP-hydrolyzing subunit KdpB by the formation of a transient KdpB/KdpC/ATP ternary complex. This Janthinobacterium sp. (strain Marseille) (Minibacterium massiliensis) protein is Potassium-transporting ATPase KdpC subunit.